The sequence spans 242 residues: Octanoyltransferase (242 aa).

In terms of domain architecture, BPL/LPL catalytic spans 31–206; sequence SQTTDEIWFL…LFLKNFGYNQ (176 aa). Residues 70–77, 137–139, and 150–152 each bind substrate; these read RGGQVTYH, SIG, and GLA. Catalysis depends on cysteine 168, which acts as the Acyl-thioester intermediate.

It belongs to the LipB family.

It is found in the cytoplasm. It catalyses the reaction octanoyl-[ACP] + L-lysyl-[protein] = N(6)-octanoyl-L-lysyl-[protein] + holo-[ACP] + H(+). Its pathway is protein modification; protein lipoylation via endogenous pathway; protein N(6)-(lipoyl)lysine from octanoyl-[acyl-carrier-protein]: step 1/2. Functionally, catalyzes the transfer of endogenously produced octanoic acid from octanoyl-acyl-carrier-protein onto the lipoyl domains of lipoate-dependent enzymes. Lipoyl-ACP can also act as a substrate although octanoyl-ACP is likely to be the physiological substrate. The sequence is that of Octanoyltransferase from Coxiella burnetii (strain CbuG_Q212) (Coxiella burnetii (strain Q212)).